The following is a 196-amino-acid chain: Endonuclease V (196 aa).

Residues Asp37 and Asp98 each contribute to the Mg(2+) site.

The protein belongs to the endonuclease V family. Mg(2+) serves as cofactor.

The protein localises to the cytoplasm. The enzyme catalyses Endonucleolytic cleavage at apurinic or apyrimidinic sites to products with a 5'-phosphate.. DNA repair enzyme involved in the repair of deaminated bases. Selectively cleaves double-stranded DNA at the second phosphodiester bond 3' to a deoxyinosine leaving behind the intact lesion on the nicked DNA. This is Endonuclease V from Sulfolobus acidocaldarius (strain ATCC 33909 / DSM 639 / JCM 8929 / NBRC 15157 / NCIMB 11770).